A 266-amino-acid polypeptide reads, in one-letter code: Interleukin-1 beta (266 aa).

Residues Met1–Asp113 constitute a propeptide that is removed on maturation.

It belongs to the IL-1 family. In terms of assembly, monomer. In its precursor form, weakly interacts with full-length MEFV; the mature cytokine does not interact at all. Interacts with integrins ITGAV:ITGBV and ITGA5:ITGB1; integrin-binding is required for IL1B signaling. Interacts with cargo receptor TMED10; the interaction is direct and is required for the secretion of IL1B mature form. Interacts with HSP90AB1; the interaction facilitates cargo translocation into the ERGIC. Interacts with HSP90B1; the interaction facilitates cargo translocation into the ERGIC.

Its subcellular location is the cytoplasm. It localises to the cytosol. It is found in the secreted. The protein resides in the lysosome. The protein localises to the extracellular exosome. In terms of biological role, potent pro-inflammatory cytokine. Initially discovered as the major endogenous pyrogen, induces prostaglandin synthesis, neutrophil influx and activation, T-cell activation and cytokine production, B-cell activation and antibody production, and fibroblast proliferation and collagen production. Promotes Th17 differentiation of T-cells. Synergizes with IL12/interleukin-12 to induce IFNG synthesis from T-helper 1 (Th1) cells. Plays a role in angiogenesis by inducing VEGF production synergistically with TNF and IL6. Involved in transduction of inflammation downstream of pyroptosis: its mature form is specifically released in the extracellular milieu by passing through the gasdermin-D (GSDMD) pore. This chain is Interleukin-1 beta (IL1B), found in Delphinapterus leucas (Beluga whale).